The chain runs to 515 residues: GMP synthase [glutamine-hydrolyzing] (515 aa).

Residues 6–198 (KVIIIDYGSQ…LFHVAKLKAD (193 aa)) enclose the Glutamine amidotransferase type-1 domain. The active-site Nucleophile is the Cys-83. Active-site residues include His-172 and Glu-174. The region spanning 199 to 390 (WTMSSFVERA…LGLPDFIIWR (192 aa)) is the GMPS ATP-PPase domain. 226 to 232 (SGGIDST) contributes to the ATP binding site.

Homodimer.

The enzyme catalyses XMP + L-glutamine + ATP + H2O = GMP + L-glutamate + AMP + diphosphate + 2 H(+). It functions in the pathway purine metabolism; GMP biosynthesis; GMP from XMP (L-Gln route): step 1/1. Catalyzes the synthesis of GMP from XMP. The protein is GMP synthase [glutamine-hydrolyzing] of Nitratidesulfovibrio vulgaris (strain DSM 19637 / Miyazaki F) (Desulfovibrio vulgaris).